Consider the following 740-residue polypeptide: MTVKLDFEECLKDSPRFRASIELVEAEVSELETRLEKLLKLGTGLLESGRHYLAASRAFVVGICDLARLGPPEPMMAECLEKFTVSLNHKLDSHAELLDATQHTLQQQIQTLVKEGLRGFREARRDFWRGAESLEAALTHNAEVPRRRAQEAEEAGAALRTARAGYRGRALDYALQINVIEDKRKFDIMEFVLRLVEAQATHFQQGHEELSRLSQYRKELGAQLHQLVLNSAREKRDMEQRHVLLKQKELGGEEPEPSLREGPGGLVMEGHLFKRASNAFKTWSRRWFTIQSNQLVYQKKYKDPVTVVVDDLRLCTVKLCPDSERRFCFEVVSTSKSCLLQADSERLLQLWVSAVQSSIASAFSQARLDDSPRGPGQGSGHLAIGSAATLGSGGMARGREPGGVGHVVAQVQSVDGNAQCCDCREPAPEWASINLGVTLCIQCSGIHRSLGVHFSKVRSLTLDSWEPELVKLMCELGNVIINQIYEARVEAMAVKKPGPSCSRQEKEAWIHAKYVEKKFLTKLPEIRGRRGGRGRPRGQPPVPPKPSIRPRPGSLRSKPEPPSEDLGSLHPGALLFRASGHPPSLPTMADALAHGADVNWVNGGQDNATPLIQATAANSLLACEFLLQNGANVNQADSAGRGPLHHATILGHTGLACLFLKRGADLGARDSEGRDPLTIAMETANADIVTLLRLAKMREAEAAQGQAGDETYLDIFRDFSLMASDDPEKLSRRSHDLHTL.

A BAR domain is found at 1-226; that stretch reads MTVKLDFEEC…RKELGAQLHQ (226 aa). A required for formation of endosomal tubules when overexpressed with PIP5K1C region spans residues 1–382; the sequence is MTVKLDFEEC…RGPGQGSGHL (382 aa). A PH domain is found at 265–360; the sequence is GLVMEGHLFK…WVSAVQSSIA (96 aa). In terms of domain architecture, Arf-GAP spans 405 to 527; that stretch reads GHVVAQVQSV…KFLTKLPEIR (123 aa). The segment at 405–740 is required for interaction with GULP1; sequence GHVVAQVQSV…SRRSHDLHTL (336 aa). The C4-type zinc-finger motif lies at 420–443; it reads CCDCREPAPEWASINLGVTLCIQC. Residue Tyr-485 is modified to 3'-nitrotyrosine. Residues 525 to 566 are prevents interaction with ITGB1 when S-554 is not phosphorylated; that stretch reads EIRGRRGGRGRPRGQPPVPPKPSIRPRPGSLRSKPEPPSEDL. Residues 525-581 are disordered; the sequence is EIRGRRGGRGRPRGQPPVPPKPSIRPRPGSLRSKPEPPSEDLGSLHPGALLFRASGH. Positions 538 to 549 are enriched in pro residues; sequence GQPPVPPKPSIR. Phosphoserine; by PKB is present on Ser-554. ANK repeat units lie at residues 606–635, 639–668, and 672–702; these read DNAT…NVNQ, AGRG…DLGA, and EGRD…EAEA.

As to quaternary structure, banana-shaped homodimer laterally assembling into tetramers, the tetramers further pack helically onto the membrane. Interacts with GTP-bound ARF6. Interacts with third cytoplasmic loop of SLC2A4/GLUT4. Interacts with CLTC. Interacts with GULP1. Forms a complex with GDP-bound ARF6 and GULP1. Interacts with ITGB1; required for ITGB1 recycling. Phosphorylation at Ser-554 by PKB is required for interaction with ITGB1, export of ITGB1 from recycling endosomes to the cell surface and ITGB1-dependent cell migration. In terms of tissue distribution, highest level in lung and spleen. Low level in heart, kidney, liver and pancreas.

Its subcellular location is the recycling endosome membrane. GAP activity stimulated by phosphatidylinositol 4,5-bisphosphate (PIP2) and phosphatidic acid. Functionally, GTPase-activating protein (GAP) for ADP ribosylation factor 6 (ARF6) required for clathrin-dependent export of proteins from recycling endosomes to trans-Golgi network and cell surface. Required for regulated export of ITGB1 from recycling endosomes to the cell surface and ITGB1-dependent cell migration. In Homo sapiens (Human), this protein is Arf-GAP with coiled-coil, ANK repeat and PH domain-containing protein 1 (ACAP1).